The following is a 1005-amino-acid chain: MDVRCINWFESHGENRFLYLKSRCRNGETVFIRFPHYFYYVVTDEIYQSLAPPPFNARPMGKMRTIDIDETISYNLDIKDRKCSVADMWLIEEPKKRNIQNATMDEFLNISWFYISNGISPDGCYSLDDQYLTKINNGCYHCGDPRNCFAKEIPRFDIPRSYLFLDIECHFDKKFPSVFINPISHTSYCYIDLSGKRLLFTLINEEMLTEQEIQEAVDRGCLRIQSLMEMDYERELVLCSEIVLLQIAKQLLELTFDYIVTFNGHNFDLRYITNRLELLTGEKIIFRSPDKKEAVHLCIYERNQSSHKGVGGMANTTFHVNNNNGTIFFDLYSFIQKSEKLDSYKLDSISKNAFSCMGKVLNRGVREMTFIGDDTTDAKGKAAVFAKVLTTGNYVTVDDIICKVIHKDIWENGFKVVLSCPTLTNDTYKLSFGKDDVDLAQMYKDYNLNIALDMARYCIHDACLCQYLWEYYGVETKTDAGASTYVLPQSMVFGYKASTVIKGPLLKLLLETKTILVRSETKQKFPYEGGKVFAPKQKMFSNNVLIFDYNSLYPNVCIFGNLSPETLVGVVVSSNRLEEEINNQLLLQKYPPPRYITVHCEPRLPNLISEIAIFDRSIEGTIPRLLRTFLAERARYKKMLKQATSSTEKAIYDSMQYTYKIIANSVYGLMGFRNSALYSYASAKSCTSIGRRMILYLESVLNGAELSNGMLRFANPLSNPFYMDDRDINPIVKTSLPIDYRFRFRSVYGDTDSVFTEIDSQDVDKSIEIAKELERLINSRVLFNNFKIEFEAVYKNLIMQSKKKYTTMKYSASSNSKSVPERINKGTSETRRDVSKFHKNMIKIYKTRLSEMLSEGRMNSNQVCIDILRSLETDLRSEFDSRSSPLELFMLSRMHHLNYKSADNPNMYLVTEYNKNNPETIELGERYYFAYICPANVPWTKKLVNIKTYETIIDRSFKLGSDQRIFYEVYFKRLTSEIVNLLDNKVLCISFFERMFGSRPTFYEA.

It belongs to the DNA polymerase type-B family. Interacts with OPG148. Component of the Uracil-DNA glycosylase(UDG)-OPG148-polymerase complex; OPG148 and OPG116/UDG form a heterodimeric processivity factor that associates with OPG071 to form the processive polymerase holoenzyme.

The catalysed reaction is DNA(n) + a 2'-deoxyribonucleoside 5'-triphosphate = DNA(n+1) + diphosphate. Catalyzes DNA synthesis. Acquires processivity by associating with a heterodimeric processivity factor comprised of the viral OPG148 and OPG116 proteins, thereby forming the DNA polymerase holoenzyme. Displays 3'- to 5' exonuclease activity. Might participate in viral DNA recombination. Does not perform OPG116/D4synthesis across an abasic site. This is DNA polymerase (OPG071) from Variola virus (isolate Human/India/Ind3/1967) (VARV).